We begin with the raw amino-acid sequence, 514 residues long: UDP-N-acetylmuramate--L-alanine ligase (514 aa).

127 to 133 (GTHGKTT) lines the ATP pocket. The segment covering 495–505 (IGGTIPDIPGG) has biased composition (low complexity). The interval 495-514 (IGGTIPDIPGGSTPDASAAG) is disordered.

The protein belongs to the MurCDEF family.

It localises to the cytoplasm. It catalyses the reaction UDP-N-acetyl-alpha-D-muramate + L-alanine + ATP = UDP-N-acetyl-alpha-D-muramoyl-L-alanine + ADP + phosphate + H(+). Its pathway is cell wall biogenesis; peptidoglycan biosynthesis. Functionally, cell wall formation. This chain is UDP-N-acetylmuramate--L-alanine ligase, found in Salinispora tropica (strain ATCC BAA-916 / DSM 44818 / JCM 13857 / NBRC 105044 / CNB-440).